The chain runs to 95 residues: Basic phospholipase A2 (95 aa).

N6-palmitoyl lysine attachment occurs at residues Lys7 and Lys10. 3 residues coordinate Ca(2+): Tyr23, Gly25, and Gly27. Disulfide bonds link Cys24–Cys40, Cys39–Cys77, Cys46–Cys70, Cys53–Cys63, and Cys57–Cys68. The active site involves His43. Ca(2+) is bound at residue Asp44. Asp71 is an active-site residue.

Monomer. It depends on Ca(2+) as a cofactor. In terms of tissue distribution, expressed by the venom gland.

It localises to the secreted. The enzyme catalyses a 1,2-diacyl-sn-glycero-3-phosphocholine + H2O = a 1-acyl-sn-glycero-3-phosphocholine + a fatty acid + H(+). PLA2 catalyzes the calcium-dependent hydrolysis of the 2-acyl groups in 3-sn-phosphoglycerides. Induces local and systemic myotoxicity in an intramuscular mouse model. Induces local edema in a mouse footpad assay. Does not exhibit any anticoagulant effects. Does not mediate an antibacterial effect against Gram-negative and Gram-positive bacteria. The chain is Basic phospholipase A2 from Agkistrodon piscivorus leucostoma (Western cottonmouth).